Consider the following 1134-residue polypeptide: Protocadherin 18 (1134 aa).

The signal sequence occupies residues 1–27; sequence MHQMNTKMHFRFALALLMAFFSHDVLA. 6 consecutive Cadherin domains span residues 28–137, 138–246, 247–354, 361–465, 466–576, and 582–688; these read KNLK…SPQF, SRPV…SPAF, EQPS…KPEI, PGKE…PPRF, QRSR…VPVV, and HNNT…STAM. The Extracellular portion of the chain corresponds to 28–699; that stretch reads KNLKYRIYEE…SVSRASLDVS (672 aa). Residue N103 is glycosylated (N-linked (GlcNAc...) asparagine). An N-linked (GlcNAc...) asparagine glycan is attached at N269. The N-linked (GlcNAc...) asparagine glycan is linked to N559. Residues 700-720 form a helical membrane-spanning segment; it reads MIIIISLGAICAVLLVIMVLF. At 721-1134 the chain is on the cytoplasmic side; that stretch reads ATRCNREKKD…NKLLQDVRQS (414 aa). 4 disordered regions span residues 769-800, 868-888, 941-1004, and 1022-1083; these read LPIRSHHRSSPSSSPTLERGQMGSRQSHNSHQ, SLKDSGRGDSEAGDSDYDLGR, DYRS…SSLL, and FSEC…PSSK. A compositionally biased stretch (polar residues) spans 791–800; that stretch reads GSRQSHNSHQ. Basic and acidic residues predominate over residues 868 to 877; that stretch reads SLKDSGRGDS. Residues 892–1134 are interaction with DAB1; the sequence is IDRLLGEGFS…NKLLQDVRQS (243 aa). A compositionally biased stretch (basic and acidic residues) spans 1027–1038; that stretch reads EGDRSNSLERRK. Positions 1059 to 1082 are enriched in polar residues; sequence THFQNPTSSSGTPLGTHSSVQPSS.

Interacts with DAB1. Predominantly expressed in kidney and lung.

The protein localises to the cell membrane. Its function is as follows. Potential calcium-dependent cell-adhesion protein. This chain is Protocadherin 18 (Pcdh18), found in Mus musculus (Mouse).